The chain runs to 103 residues: Large ribosomal subunit protein bL21 (103 aa).

This sequence belongs to the bacterial ribosomal protein bL21 family. As to quaternary structure, part of the 50S ribosomal subunit. Contacts protein L20.

Its function is as follows. This protein binds to 23S rRNA in the presence of protein L20. The chain is Large ribosomal subunit protein bL21 from Acinetobacter baumannii (strain AB307-0294).